The primary structure comprises 110 residues: Co-chaperonin GroES (110 aa).

This sequence belongs to the GroES chaperonin family. In terms of assembly, heptamer of 7 subunits arranged in a ring. Interacts with the chaperonin GroEL.

It localises to the cytoplasm. Together with the chaperonin GroEL, plays an essential role in assisting protein folding. The GroEL-GroES system forms a nano-cage that allows encapsulation of the non-native substrate proteins and provides a physical environment optimized to promote and accelerate protein folding. GroES binds to the apical surface of the GroEL ring, thereby capping the opening of the GroEL channel. In Mycoplasma genitalium (strain ATCC 33530 / DSM 19775 / NCTC 10195 / G37) (Mycoplasmoides genitalium), this protein is Co-chaperonin GroES.